The sequence spans 616 residues: Adenylosuccinate synthetase 2 (616 aa).

Residues Met1–Asn26 form a disordered region. Polar residues predominate over residues Pro17–Asn26. Residues Gly87–Lys93 and Gly117–Thr119 each bind GTP. The Proton acceptor role is filled by Asp88. Residues Asp88 and Gly117 each coordinate Mg(2+). IMP-binding positions include Asp88–Lys91, Asn115–His118, Thr202, Lys216, Gln328, Thr343, and Lys472. The active-site Proton donor is His118. Residue Ala468–Arg474 coordinates substrate. GTP contacts are provided by residues Arg474 and Gly603–Gly605.

This sequence belongs to the adenylosuccinate synthetase family. Homodimer. Requires Mg(2+) as cofactor.

It is found in the cytoplasm. It carries out the reaction IMP + L-aspartate + GTP = N(6)-(1,2-dicarboxyethyl)-AMP + GDP + phosphate + 2 H(+). Its pathway is purine metabolism; AMP biosynthesis via de novo pathway; AMP from IMP: step 1/2. In terms of biological role, plays an important role in the salvage pathway for purine nucleotide biosynthesis. Catalyzes the first committed step in the biosynthesis of AMP from IMP. The chain is Adenylosuccinate synthetase 2 from Trypanosoma cruzi (strain CL Brener).